Consider the following 117-residue polypeptide: Large ribosomal subunit protein bL20 (117 aa).

The protein belongs to the bacterial ribosomal protein bL20 family.

Its function is as follows. Binds directly to 23S ribosomal RNA and is necessary for the in vitro assembly process of the 50S ribosomal subunit. It is not involved in the protein synthesizing functions of that subunit. The chain is Large ribosomal subunit protein bL20 from Pasteurella multocida (strain Pm70).